The following is a 362-amino-acid chain: Porin Omp2b (362 aa).

An N-terminal signal peptide occupies residues 1 to 22 (MNIKSLLLGSAAALVAASGAQA).

The protein belongs to the alphaproteobacteria porin family. Homotrimer.

The protein localises to the cell outer membrane. Functionally, forms passive diffusion pores that allow small molecular weight hydrophilic materials across the outer membrane. The protein is Porin Omp2b (omp2b) of Brucella canis (strain ATCC 23365 / NCTC 10854 / RM-666).